The primary structure comprises 511 residues: Aprataxin and PNK-like factor (511 aa).

The region spanning 1 to 108 (MSGGFELQPR…RILSIPSEVE (108 aa)) is the FHA-like domain. Ser-116 is subject to Phosphoserine; by ATM. Phosphoserine is present on Ser-149. The KBM motif lies at 182-191 (RKRILPTWML). The disordered stretch occupies residues 223 to 370 (KSQLNTTQQG…ATDSVLQGSE (148 aa)). Polar residues-rich tracts occupy residues 225-249 (QLNT…SAEQ) and 263-293 (STIS…NAQR). Residues 304-315 (VSKHKIATKRTP) are compositionally biased toward basic residues. The span at 324–344 (CSENCSSAQGDSLQDESQGSH) shows a compositional bias: polar residues. The segment covering 345–355 (SESSSNPSNPE) has biased composition (low complexity). A glycoprotein-binding residues include Arg-376, Tyr-381, Tyr-386, and Arg-387. The PBZ-type 1 zinc finger occupies 377 to 398 (TSCMYGANCYRKNPVHFQHFSH). The interval 406-416 (GVQIVGQDETD) is flexible linker. The PBZ-type 2 zinc finger occupies 419–440 (PECPYGPSCYRKNPQHKIEYRH). A glycoprotein is bound by residues Tyr-423, Tyr-428, and Arg-429. The interval 449–497 (LDEDNDNVGQPNEYDLNDSFLDDEEEDYEPTDEDSDWEPGKEDEEKEDV) is disordered. Residues 468-497 (FLDDEEEDYEPTDEDSDWEPGKEDEEKEDV) are compositionally biased toward acidic residues. The short motif at 476-500 (YEPTDEDSDWEPGKEDEEKEDVEEL) is the NAP1L motif element. Residues 487 to 511 (PGKEDEEKEDVEELLKEAKRFMKRK) adopt a coiled-coil conformation.

It belongs to the APLF family. In terms of assembly, interacts with LIG4. Interacts with PARP1. Interacts with XRCC4. Interacts (via KBM motif) with XRCC5 and XRCC6; promoting recruitment to DNA damage sites. Interacts with XRCC1. Interacts (via C-terminal disordered region) with histones; interacts with histone H2A, H2B and H3-H4. Poly-ADP-ribosylated. In addition to binding non covalently poly-ADP-ribose via its PBZ-type zinc fingers, the protein is also covalently poly-ADP-ribosylated by PARP1. In terms of processing, phosphorylated in an ATM-dependent manner upon double-strand DNA break.

It is found in the nucleus. The protein resides in the chromosome. It localises to the cytoplasm. Its subcellular location is the cytosol. Functionally, histone chaperone involved in single-strand and double-strand DNA break repair. Recruited to sites of DNA damage through interaction with branched poly-ADP-ribose chains, a polymeric post-translational modification synthesized transiently at sites of chromosomal damage to accelerate DNA strand break repair reactions. Following recruitment to DNA damage sites, acts as a histone chaperone that mediates histone eviction during DNA repair and promotes recruitment of histone variant MACROH2A1. Also has a nuclease activity: displays apurinic-apyrimidinic (AP) endonuclease and 3'-5' exonuclease activities in vitro. Also able to introduce nicks at hydroxyuracil and other types of pyrimidine base damage. Together with PARP3, promotes the retention of the LIG4-XRCC4 complex on chromatin and accelerate DNA ligation during non-homologous end-joining (NHEJ). Also acts as a negative regulator of cell pluripotency by promoting histone exchange. Required for the embryo implantation during the epithelial to mesenchymal transition in females. In Homo sapiens (Human), this protein is Aprataxin and PNK-like factor.